The sequence spans 193 residues: Ion-translocating oxidoreductase complex subunit A (193 aa).

6 helical membrane passes run 5 to 25 (LLLF…FLGL), 39 to 59 (MGMG…AWLI), 63 to 83 (ILIP…VIAV), 102 to 122 (LLGI…VALL), 134 to 154 (ALYG…FTAI), and 171 to 191 (AIAL…SGLV).

The protein belongs to the NqrDE/RnfAE family. The complex is composed of six subunits: RsxA, RsxB, RsxC, RsxD, RsxE and RsxG.

Its subcellular location is the cell inner membrane. Part of a membrane-bound complex that couples electron transfer with translocation of ions across the membrane. Required to maintain the reduced state of SoxR. In Shigella boydii serotype 4 (strain Sb227), this protein is Ion-translocating oxidoreductase complex subunit A.